A 370-amino-acid chain; its full sequence is Glycerophosphodiester phosphodiesterase GDPD3 (370 aa).

Positions 35 to 322 (FVLMGHRGFG…DMVKDISEAI (288 aa)) constitute a GP-PDE domain.

The protein belongs to the glycerophosphoryl diester phosphodiesterase family. Expressed in flowers and siliques.

It catalyses the reaction a sn-glycero-3-phosphodiester + H2O = an alcohol + sn-glycerol 3-phosphate + H(+). This is Glycerophosphodiester phosphodiesterase GDPD3 from Arabidopsis thaliana (Mouse-ear cress).